A 91-amino-acid polypeptide reads, in one-letter code: Small ribosomal subunit protein bS20 (91 aa).

The tract at residues 1-25 (MANSPSAKKRAKQAEKRRSHNASLR) is disordered. Over residues 7 to 20 (AKKRAKQAEKRRSH) the composition is skewed to basic residues.

This sequence belongs to the bacterial ribosomal protein bS20 family.

Its function is as follows. Binds directly to 16S ribosomal RNA. In Azotobacter vinelandii (strain DJ / ATCC BAA-1303), this protein is Small ribosomal subunit protein bS20.